Reading from the N-terminus, the 505-residue chain is Trans-cinnamate 4-monooxygenase (505 aa).

The helical transmembrane segment at 3-23 (LLLLEKTLLGLFIAAITAIAI) threads the bilayer. Residues 213 to 218 (RSRLAQ) and A306 contribute to the (E)-cinnamate site. C447 provides a ligand contact to heme.

The protein belongs to the cytochrome P450 family. Heme serves as cofactor.

It is found in the membrane. It catalyses the reaction (E)-cinnamate + reduced [NADPH--hemoprotein reductase] + O2 = (E)-4-coumarate + oxidized [NADPH--hemoprotein reductase] + H2O + H(+). The protein operates within phenylpropanoid metabolism; trans-4-coumarate biosynthesis; trans-4-coumarate from trans-cinnamate: step 1/1. Catalyzes the first oxidative step of the phenylpropanoid pathway in higher plants by transforming trans-cinnamate into p-coumarate. The compounds formed by this pathway are essential components for lignification, pollination, and defense against ultraviolet light, predators and pathogens. This chain is Trans-cinnamate 4-monooxygenase (CYP73A14), found in Glycyrrhiza echinata (Licorice).